The sequence spans 214 residues: ATP phosphoribosyltransferase (214 aa).

Belongs to the ATP phosphoribosyltransferase family. Short subfamily. Heteromultimer composed of HisG and HisZ subunits.

It localises to the cytoplasm. It catalyses the reaction 1-(5-phospho-beta-D-ribosyl)-ATP + diphosphate = 5-phospho-alpha-D-ribose 1-diphosphate + ATP. Its pathway is amino-acid biosynthesis; L-histidine biosynthesis; L-histidine from 5-phospho-alpha-D-ribose 1-diphosphate: step 1/9. Its function is as follows. Catalyzes the condensation of ATP and 5-phosphoribose 1-diphosphate to form N'-(5'-phosphoribosyl)-ATP (PR-ATP). Has a crucial role in the pathway because the rate of histidine biosynthesis seems to be controlled primarily by regulation of HisG enzymatic activity. This Marinobacter nauticus (strain ATCC 700491 / DSM 11845 / VT8) (Marinobacter aquaeolei) protein is ATP phosphoribosyltransferase.